The chain runs to 123 residues: Small ribosomal subunit protein uS12 (123 aa).

Position 89 is a 3-methylthioaspartic acid (Asp-89). A disordered region spans residues 104-123 (TQGVKDRRQRRSKYGAKRPK). Residues 110-123 (RRQRRSKYGAKRPK) show a composition bias toward basic residues.

The protein belongs to the universal ribosomal protein uS12 family. In terms of assembly, part of the 30S ribosomal subunit. Contacts proteins S8 and S17. May interact with IF1 in the 30S initiation complex.

Functionally, with S4 and S5 plays an important role in translational accuracy. Interacts with and stabilizes bases of the 16S rRNA that are involved in tRNA selection in the A site and with the mRNA backbone. Located at the interface of the 30S and 50S subunits, it traverses the body of the 30S subunit contacting proteins on the other side and probably holding the rRNA structure together. The combined cluster of proteins S8, S12 and S17 appears to hold together the shoulder and platform of the 30S subunit. The polypeptide is Small ribosomal subunit protein uS12 (Rhodospirillum rubrum (strain ATCC 11170 / ATH 1.1.1 / DSM 467 / LMG 4362 / NCIMB 8255 / S1)).